The sequence spans 295 residues: Aspartate carbamoyltransferase catalytic subunit (295 aa).

Arg49 and Thr50 together coordinate carbamoyl phosphate. Lys77 provides a ligand contact to L-aspartate. Residues Arg99, His127, and Gln130 each contribute to the carbamoyl phosphate site. 2 residues coordinate L-aspartate: Arg161 and Arg212. The carbamoyl phosphate site is built by Gly251 and Pro252.

It belongs to the aspartate/ornithine carbamoyltransferase superfamily. ATCase family. Heterododecamer (2C3:3R2) of six catalytic PyrB chains organized as two trimers (C3), and six regulatory PyrI chains organized as three dimers (R2).

It carries out the reaction carbamoyl phosphate + L-aspartate = N-carbamoyl-L-aspartate + phosphate + H(+). It participates in pyrimidine metabolism; UMP biosynthesis via de novo pathway; (S)-dihydroorotate from bicarbonate: step 2/3. Functionally, catalyzes the condensation of carbamoyl phosphate and aspartate to form carbamoyl aspartate and inorganic phosphate, the committed step in the de novo pyrimidine nucleotide biosynthesis pathway. The protein is Aspartate carbamoyltransferase catalytic subunit of Campylobacter jejuni subsp. jejuni serotype O:6 (strain 81116 / NCTC 11828).